The chain runs to 135 residues: Galectin-1 (135 aa).

Ala2 is modified (N-acetylalanine). A Galectin domain is found at 4 to 135 (GLVASNLNLK…DFKIKCVAFE (132 aa)). Lys13 and Lys29 each carry N6-acetyllysine. Residue Ser30 is modified to Phosphoserine. Residues 45-49 (HFNPR), His53, Asn62, and 69-72 (WGAE) contribute to the a beta-D-galactoside site. At Lys108 the chain carries N6-acetyllysine; alternate. Lys108 carries the N6-succinyllysine; alternate modification. Lys128 bears the N6-acetyllysine mark.

Homodimer. Binds LGALS3BP. Interacts with CD2, CD3, CD4, CD6, CD7, CD43, ALCAM and CD45. Interacts with laminin (via poly-N-acetyllactosamine). Interacts with SUSD2. Interacts with cargo receptor TMED10; the interaction mediates the translocation from the cytoplasm into the ERGIC (endoplasmic reticulum-Golgi intermediate compartment) and thereby secretion.

The protein resides in the secreted. The protein localises to the extracellular space. It is found in the extracellular matrix. It localises to the cytoplasm. Its function is as follows. Lectin that binds beta-galactoside and a wide array of complex carbohydrates. Plays a role in regulating apoptosis, cell proliferation and cell differentiation. Inhibits CD45 protein phosphatase activity and therefore the dephosphorylation of Lyn kinase. Strong inducer of T-cell apoptosis. In Bos taurus (Bovine), this protein is Galectin-1 (LGALS1).